The following is a 207-amino-acid chain: SPRY domain-containing protein 4 (207 aa).

Positions 12–207 (YRWGTKRWGV…HSGLEVPKGL (196 aa)) constitute a B30.2/SPRY domain. Residues K53 and K130 each carry the N6-acetyllysine modification. N6-succinyllysine is present on K139.

This chain is SPRY domain-containing protein 4 (Spryd4), found in Rattus norvegicus (Rat).